The sequence spans 138 residues: Acyl carrier protein 1, chloroplastic (138 aa).

The transit peptide at Met-1 to Ala-56 directs the protein to the chloroplast. Residues Lys-59–Leu-134 enclose the Carrier domain. An O-(pantetheine 4'-phosphoryl)serine modification is found at Ser-94.

The protein belongs to the acyl carrier protein (ACP) family. Post-translationally, 4'-phosphopantetheine is transferred from CoA to a specific serine of apo-ACP by acpS. This modification is essential for activity because fatty acids are bound in thioester linkage to the sulfhydryl of the prosthetic group.

The protein localises to the plastid. It is found in the chloroplast. It participates in lipid metabolism; fatty acid biosynthesis. Carrier of the growing fatty acid chain in fatty acid biosynthesis. The polypeptide is Acyl carrier protein 1, chloroplastic (ACL1.1) (Spinacia oleracea (Spinach)).